Consider the following 292-residue polypeptide: Cbb3-type cytochrome c oxidase subunit CcoP (292 aa).

2 consecutive transmembrane segments (helical) span residues Phe-11–Ile-31 and Val-62–Gly-82. Cytochrome c domains follow at residues Glu-116 to Ile-195 and Gln-205 to Lys-288. Heme c-binding residues include Cys-129, Cys-132, His-133, Met-174, Cys-219, Cys-222, His-223, and Met-264.

The protein belongs to the CcoP / FixP family. Component of the cbb3-type cytochrome c oxidase at least composed of CcoN, CcoO, CcoQ and CcoP. The cofactor is heme c.

It localises to the cell inner membrane. It participates in energy metabolism; oxidative phosphorylation. Its function is as follows. C-type cytochrome. Part of the cbb3-type cytochrome c oxidase complex. CcoP subunit is required for transferring electrons from donor cytochrome c via its heme groups to CcoO subunit. From there, electrons are shuttled to the catalytic binuclear center of CcoN subunit where oxygen reduction takes place. The complex also functions as a proton pump. The protein is Cbb3-type cytochrome c oxidase subunit CcoP of Helicobacter pylori (strain 52).